Consider the following 332-residue polypeptide: DnAJ-like protein slr0093 (332 aa).

Residues 6 to 75 (FKDYYQILGV…RQKYDQFGRY (70 aa)) enclose the J domain.

In Synechocystis sp. (strain ATCC 27184 / PCC 6803 / Kazusa), this protein is DnAJ-like protein slr0093.